The primary structure comprises 166 residues: Crossover junction endodeoxyribonuclease RuvC (166 aa).

Catalysis depends on residues D7, E68, and D141. Mg(2+) contacts are provided by D7, E68, and D141.

It belongs to the RuvC family. Homodimer which binds Holliday junction (HJ) DNA. The HJ becomes 2-fold symmetrical on binding to RuvC with unstacked arms; it has a different conformation from HJ DNA in complex with RuvA. In the full resolvosome a probable DNA-RuvA(4)-RuvB(12)-RuvC(2) complex forms which resolves the HJ. Requires Mg(2+) as cofactor.

It is found in the cytoplasm. The enzyme catalyses Endonucleolytic cleavage at a junction such as a reciprocal single-stranded crossover between two homologous DNA duplexes (Holliday junction).. Functionally, the RuvA-RuvB-RuvC complex processes Holliday junction (HJ) DNA during genetic recombination and DNA repair. Endonuclease that resolves HJ intermediates. Cleaves cruciform DNA by making single-stranded nicks across the HJ at symmetrical positions within the homologous arms, yielding a 5'-phosphate and a 3'-hydroxyl group; requires a central core of homology in the junction. The consensus cleavage sequence is 5'-(A/T)TT(C/G)-3'. Cleavage occurs on the 3'-side of the TT dinucleotide at the point of strand exchange. HJ branch migration catalyzed by RuvA-RuvB allows RuvC to scan DNA until it finds its consensus sequence, where it cleaves and resolves the cruciform DNA. The sequence is that of Crossover junction endodeoxyribonuclease RuvC from Caldicellulosiruptor saccharolyticus (strain ATCC 43494 / DSM 8903 / Tp8T 6331).